The following is a 151-amino-acid chain: Probable cGMP 3',5'-cyclic phosphodiesterase subunit delta (151 aa).

It belongs to the PDE6D/unc-119 family. Interacts with Pde6.

The protein resides in the nucleus. Its subcellular location is the cytoplasm. The sequence is that of Probable cGMP 3',5'-cyclic phosphodiesterase subunit delta from Drosophila mojavensis (Fruit fly).